The sequence spans 222 residues: MIVEKIAAWLLYPLCLLRCFLCNSVRPATCKCVHCLLYPFEVCCECMSETLDSLEHSCCYCCVLPLLIIREFWRRVILPTLKATCDCIRLPCVLTRRFCKRTICPLAKSWCRCFCCPCEVFLRCLLFPCMMLRRMHRGRLTGVREPGAFRDSRDPARRGTWVNDWCEDLCVWIWSPCCYVKRCIRTMCDTFTKKIFYWFIAPAGSPRMPEEPSPLSRKVFSS.

This is an uncharacterized protein from Fowlpox virus (strain NVSL) (FPV).